We begin with the raw amino-acid sequence, 318 residues long: MYFMNLLTTIIPILLAVAFLTLLERKVLGYMQLRKGPNIVGPYGLLQPIADAIKLFTKEPLQPLTSSHVLFIIAPTLALTLALMMWIPLPMPHPLTNMNLSILFMLALSSLAVYGIMWSGWASNSKYALIGALRAVAQTISYEVTLAIIILSILLMNGSFALSTLITTQEHIWLILPSWPLAMMWFISTLAETNRAPFDLTEGESELVSGFNVEYAGGPSALFFLAEYANIIMMNALTIILFLGAHNNPMFPELYTTNFMIKALVLTTLFLWVRASYPRFRYDQLMHLLWKNFLPLTLVMCMWHVTLPIILAGIPPQT.

8 consecutive transmembrane segments (helical) span residues Phe3 to Leu23, Val69 to Leu89, Ile102 to Ala122, Leu146 to Ile166, His171 to Ala191, Leu222 to Phe242, Glu253 to Val273, and Leu294 to Ile314.

The protein belongs to the complex I subunit 1 family. As to quaternary structure, core subunit of respiratory chain NADH dehydrogenase (Complex I) which is composed of 45 different subunits.

It is found in the mitochondrion inner membrane. It catalyses the reaction a ubiquinone + NADH + 5 H(+)(in) = a ubiquinol + NAD(+) + 4 H(+)(out). Its function is as follows. Core subunit of the mitochondrial membrane respiratory chain NADH dehydrogenase (Complex I) which catalyzes electron transfer from NADH through the respiratory chain, using ubiquinone as an electron acceptor. Essential for the catalytic activity and assembly of complex I. This is NADH-ubiquinone oxidoreductase chain 1 (MT-ND1) from Cnephaeus nilssonii (Northern bat).